Here is a 479-residue protein sequence, read N- to C-terminus: Ribosomal RNA small subunit methyltransferase F (479 aa).

Residues 125–131 (AAAPGSK), glutamate 149, aspartate 176, and aspartate 194 each bind S-adenosyl-L-methionine. Catalysis depends on cysteine 247, which acts as the Nucleophile.

Belongs to the class I-like SAM-binding methyltransferase superfamily. RsmB/NOP family.

The protein resides in the cytoplasm. The enzyme catalyses cytidine(1407) in 16S rRNA + S-adenosyl-L-methionine = 5-methylcytidine(1407) in 16S rRNA + S-adenosyl-L-homocysteine + H(+). Functionally, specifically methylates the cytosine at position 1407 (m5C1407) of 16S rRNA. The protein is Ribosomal RNA small subunit methyltransferase F of Escherichia coli (strain ATCC 8739 / DSM 1576 / NBRC 3972 / NCIMB 8545 / WDCM 00012 / Crooks).